A 387-amino-acid chain; its full sequence is Proteinase R (387 aa).

Positions 1–21 (MRLSILLGLLPLAPRPPAVDA) are cleaved as a signal peptide. Positions 22 to 108 (VEQRSEPAPL…IEQDAIVNIN (87 aa)) are excised as a propeptide. Residues 42–107 (KYIVKLKEGS…YIEQDAIVNI (66 aa)) enclose the Inhibitor I9 domain. Residues 115–387 (PWGLARISST…NLLAYNNYQG (273 aa)) form the Peptidase S8 domain. Residue Thr-124 participates in Ca(2+) binding. 2 disulfide bridges follow: Cys-142/Cys-231 and Cys-286/Cys-357. Active-site charge relay system residues include Asp-147 and His-177. Ca(2+) is bound at residue Asp-308. Ser-332 serves as the catalytic Charge relay system. Asp-368 contributes to the Ca(2+) binding site.

It belongs to the peptidase S8 family. It depends on Ca(2+) as a cofactor.

Serine proteinase. The polypeptide is Proteinase R (PROR) (Parengyodontium album (Tritirachium album)).